We begin with the raw amino-acid sequence, 2227 residues long: Genome polyprotein (2227 aa).

2 consecutive short sequence motifs ((L)YPX(n)L motif) follow at residues 167 to 171 and 200 to 205; these read YPHGL and YPVWEL. The segment at 766-836 is involved in P1-2A pentamerization; sequence MMSRIAAGDL…PRKMKGLFSQ (71 aa). Residues 1011 to 1031 traverse the membrane as a helical segment; the sequence is TVEIINTVLCFVKSGILLYVI. Residues 1043–1070 are membrane-penetrating ability; the sequence is IGLLRVMNYADIGCSVISCGKVFSKMLE. The SF3 helicase domain occupies 1204 to 1366; the sequence is HQKLKNLGSI…SFFKNPHNDM (163 aa). ATP is bound at residue 1230-1237; that stretch reads GKRGGGKS. Residues 1462-1482 form a helical membrane-spanning segment; the sequence is WVAVGAAVGILGVLVGGWFVY. The residue at position 1499 (tyrosine 1499) is an O-(5'-phospho-RNA)-tyrosine. The Peptidase C3 domain occupies 1514 to 1728; that stretch reads DPVESQSTLE…VAKLVTQEMF (215 aa). Active-site for protease 3C activity residues include histidine 1563, aspartate 1603, and cysteine 1691. Residues 1976–2097 enclose the RdRp catalytic domain; that stretch reads DVGLDLDFSA…VFSRDVQIDN (122 aa).

Belongs to the picornaviridae polyprotein family. In terms of assembly, homodimer. Homomultimer; probably interacts with membranes in a multimeric form. Seems to assemble into amyloid-like fibers. As to quaternary structure, interacts with host ACBD3. Homodimer. Monomer. Interacts with protein 3CD. In terms of assembly, interacts with protein 3AB. As to quaternary structure, interacts with human MAVS. Homodimer; disulfide-linked. In terms of assembly, homopentamer. Homooligomer. As to quaternary structure, interacts with capsid protein VP2. Interacts with capsid protein VP3. Interacts with capsid protein VP1. Interacts with capsid protein VP3. In terms of assembly, interacts with capsid protein VP1. Interacts with capsid protein VP2. Specific enzymatic cleavages by viral protease in vivo yield a variety of precursors and mature proteins. Polyprotein processing intermediates are produced, such as P1-2A which is a functional precursor of the structural proteins, VP0 which is a VP4-VP2 precursor, VP1-2A precursor, 3ABC precursor which is a stable and catalytically active precursor of 3A, 3B and 3C proteins, 3AB and 3CD precursors. The assembly signal 2A is removed from VP1-2A by a host protease, possibly host Cathepsin L. This cleavage occurs over a region of 3 amino-acids probably generating VP1 proteins with heterogeneous C-termini. Post-translationally, during virion maturation, immature virions are rendered infectious following cleavage of VP0 into VP4 and VP2. This maturation seems to be an autocatalytic event triggered by the presence of RNA in the capsid and is followed by a conformational change of the particle. In terms of processing, the assembly signal 2A is removed from VP1-2A by a host protease, possibly host Cathepsin L in naked virions. This cleavage does not occur in enveloped virions. This cleavage occurs over a region of 3 amino-acids probably generating VP1 proteins with heterogeneous C-termini. VPg is uridylylated prior to priming replication into VPg-pUpU. Post-translationally, unlike other picornaviruses, does not seem to be myristoylated.

The protein resides in the virion. Its subcellular location is the host endosome. It is found in the host multivesicular body. The protein localises to the host membrane. It localises to the host mitochondrion outer membrane. The protein resides in the host cytoplasm. Its subcellular location is the host cytoplasmic vesicle membrane. It catalyses the reaction RNA(n) + a ribonucleoside 5'-triphosphate = RNA(n+1) + diphosphate. The enzyme catalyses a ribonucleoside 5'-triphosphate + H2O = a ribonucleoside 5'-diphosphate + phosphate + H(+). It carries out the reaction Selective cleavage of Gln-|-Gly bond in the poliovirus polyprotein. In other picornavirus reactions Glu may be substituted for Gln, and Ser or Thr for Gly.. Its function is as follows. Capsid proteins VP1, VP2, and VP3 form a closed capsid enclosing the viral positive strand RNA genome. All these proteins contain a beta-sheet structure called beta-barrel jelly roll. Together they form an icosahedral capsid (T=3) composed of 60 copies of each VP1, VP2, and VP3, with a diameter of approximately 300 Angstroms. VP1 is situated at the 12 fivefold axes, whereas VP2 and VP3 are located at the quasi-sixfold axes. The naked capsid interacts with the host receptor HAVCR1 to provide virion attachment to and probably entry into the target cell. In terms of biological role, VP0 precursor is a component of the immature procapsids. Functionally, plays a role in the assembly of the 12 pentamers into an icosahedral structure. Has not been detected in mature virions, supposedly owing to its small size. Precursor component of immature procapsids that corresponds to an extended form of the structural protein VP1. After maturation, possibly by the host Cathepsin L, the assembly signal 2A is cleaved to give rise to the mature VP1 protein. Its function is as follows. Functions as a viroporin. Affects membrane integrity and causes an increase in membrane permeability. Involved in host intracellular membrane rearrangements probably to give rise to the viral factories. Does not disrupt calcium homeostasis or glycoprotein trafficking. Antagonizes the innate immune response of the host by suppressing IFN-beta synthesis, which it achieves by interfering with the RIG-I/IFIH1 pathway. In terms of biological role, affects membrane integrity and causes an increase in membrane permeability. Functionally, associates with and induces structural rearrangements of intracellular membranes. Displays RNA-binding activity. The precursor 3ABC is targeted to the mitochondrial membrane where protease 3C activity cleaves and inhibits the host antiviral protein MAVS, thereby disrupting activation of IRF3 through the IFIH1/MDA5 pathway. In vivo, the protease activity of 3ABC precursor is more efficient in cleaving the 2BC precursor than that of protein 3C. The 3ABC precursor may therefore play a role in the proteolytic processing of the polyprotein. Its function is as follows. Interacts with the 3CD precursor and with RNA structures found at both the 5'- and 3'-termini of the viral genome. Since the 3AB precursor contains the hydrophobic domain 3A, it probably anchors the whole viral replicase complex to intracellular membranes on which viral RNA synthesis occurs. In terms of biological role, may serve as membrane anchor to the 3AB and 3ABC precursors via its hydrophobic domain. May interact with RNA. Functionally, acts as a primer for viral RNA replication and remains covalently bound to viral genomic RNA. VPg is uridylylated prior to priming replication into VPg-pUpU. The VPg-pUpU is then used as primer on the genomic RNA poly(A) by the RNA-dependent RNA polymerase to replicate the viral genome. Cysteine protease that generates mature viral proteins from the precursor polyprotein. In addition to its proteolytic activity, it binds to viral RNA, and thus influences viral genome replication. RNA and substrate bind cooperatively to the protease. Cleaves IKBKG/NEMO to impair innate immune signaling. Cleaves host PABPC1 which may participate in the switch of viral translation to RNA synthesis. Its function is as follows. Interacts with the 3AB precursor and with RNA structures found at both the 5'- and 3'-termini of the viral genome. Disrupts TLR3 signaling by degrading the host adapter protein TICAM1/TRIF. In terms of biological role, RNA-directed RNA polymerase 3D-POL replicates genomic and antigenomic RNA by recognizing replications specific signals. In Human hepatitis A virus genotype IB (isolate HM175) (HHAV), this protein is Genome polyprotein.